Here is a 427-residue protein sequence, read N- to C-terminus: Trigger factor (427 aa).

The PPIase FKBP-type domain maps to 163-248 (GDTVVIDFVG…IHEVKTKEVP (86 aa)).

Belongs to the FKBP-type PPIase family. Tig subfamily.

The protein resides in the cytoplasm. It carries out the reaction [protein]-peptidylproline (omega=180) = [protein]-peptidylproline (omega=0). In terms of biological role, involved in protein export. Acts as a chaperone by maintaining the newly synthesized protein in an open conformation. Functions as a peptidyl-prolyl cis-trans isomerase. The chain is Trigger factor from Streptococcus pyogenes serotype M18 (strain MGAS8232).